The chain runs to 373 residues: 1-deoxy-D-xylulose 5-phosphate reductoisomerase (373 aa).

NADPH is bound by residues Thr10, Gly11, Ser12, Ile13, Arg37, and Asn112. Lys113 contacts 1-deoxy-D-xylulose 5-phosphate. Glu114 contributes to the NADPH binding site. Position 134 (Asp134) interacts with Mn(2+). 1-deoxy-D-xylulose 5-phosphate contacts are provided by Ser135, Glu136, Ser160, and His183. Glu136 is a Mn(2+) binding site. Gly189 contacts NADPH. The 1-deoxy-D-xylulose 5-phosphate site is built by Ser196, Asn201, Lys202, and Glu205. Residue Glu205 participates in Mn(2+) binding.

This sequence belongs to the DXR family. Mg(2+) serves as cofactor. Mn(2+) is required as a cofactor.

It carries out the reaction 2-C-methyl-D-erythritol 4-phosphate + NADP(+) = 1-deoxy-D-xylulose 5-phosphate + NADPH + H(+). The protein operates within isoprenoid biosynthesis; isopentenyl diphosphate biosynthesis via DXP pathway; isopentenyl diphosphate from 1-deoxy-D-xylulose 5-phosphate: step 1/6. In terms of biological role, catalyzes the NADPH-dependent rearrangement and reduction of 1-deoxy-D-xylulose-5-phosphate (DXP) to 2-C-methyl-D-erythritol 4-phosphate (MEP). The sequence is that of 1-deoxy-D-xylulose 5-phosphate reductoisomerase from Persephonella marina (strain DSM 14350 / EX-H1).